The chain runs to 771 residues: 5-methyltetrahydropteroyltriglutamate--homocysteine methyltransferase (771 aa).

5-methyltetrahydropteroyltri-L-glutamate-binding positions include 16–19 (RELK) and Lys-117. L-homocysteine contacts are provided by residues 443–445 (IGS) and Glu-496. Residues 443–445 (IGS) and Glu-496 each bind L-methionine. 5-methyltetrahydropteroyltri-L-glutamate-binding positions include 527-528 (RC) and Trp-573. Asp-611 is an L-homocysteine binding site. Residue Asp-611 participates in L-methionine binding. 5-methyltetrahydropteroyltri-L-glutamate is bound at residue Glu-617. 3 residues coordinate Zn(2+): His-653, Cys-655, and Glu-677. His-706 functions as the Proton donor in the catalytic mechanism. Cys-738 contributes to the Zn(2+) binding site.

This sequence belongs to the vitamin-B12 independent methionine synthase family. Requires Zn(2+) as cofactor.

The enzyme catalyses 5-methyltetrahydropteroyltri-L-glutamate + L-homocysteine = tetrahydropteroyltri-L-glutamate + L-methionine. The protein operates within amino-acid biosynthesis; L-methionine biosynthesis via de novo pathway; L-methionine from L-homocysteine (MetE route): step 1/1. In terms of biological role, catalyzes the transfer of a methyl group from 5-methyltetrahydrofolate to homocysteine resulting in methionine formation. The sequence is that of 5-methyltetrahydropteroyltriglutamate--homocysteine methyltransferase from Stutzerimonas stutzeri (strain A1501) (Pseudomonas stutzeri).